Here is a 165-residue protein sequence, read N- to C-terminus: Cytochrome c-type biogenesis protein CcmE (165 aa).

Residues 1–7 (MTRKQKR) are Cytoplasmic-facing. A helical; Signal-anchor for type II membrane protein transmembrane segment spans residues 8-28 (LAIIGGGMSFIVAAVLLVMFA). Residues 29-165 (FGQSIAYFYM…ASGDKTGATK (137 aa)) lie on the Periplasmic side of the membrane. Residues His123 and Tyr127 each contribute to the heme site. The tract at residues 138–165 (DKGLWQQGAEGAAPAASAASGDKTGATK) is disordered. A compositionally biased stretch (low complexity) spans 145–158 (GAEGAAPAASAASG).

It belongs to the CcmE/CycJ family.

Its subcellular location is the cell inner membrane. Its function is as follows. Heme chaperone required for the biogenesis of c-type cytochromes. Transiently binds heme delivered by CcmC and transfers the heme to apo-cytochromes in a process facilitated by CcmF and CcmH. This is Cytochrome c-type biogenesis protein CcmE from Agrobacterium fabrum (strain C58 / ATCC 33970) (Agrobacterium tumefaciens (strain C58)).